Reading from the N-terminus, the 377-residue chain is Flagellar P-ring protein (377 aa).

An N-terminal signal peptide occupies residues methionine 1–alanine 30.

This sequence belongs to the FlgI family. The basal body constitutes a major portion of the flagellar organelle and consists of four rings (L,P,S, and M) mounted on a central rod.

It localises to the periplasm. The protein resides in the bacterial flagellum basal body. In terms of biological role, assembles around the rod to form the L-ring and probably protects the motor/basal body from shearing forces during rotation. This Cupriavidus pinatubonensis (strain JMP 134 / LMG 1197) (Cupriavidus necator (strain JMP 134)) protein is Flagellar P-ring protein.